The primary structure comprises 467 residues: Glutamate--tRNA ligase (467 aa).

The 'HIGH' region signature appears at 9 to 19; sequence PSPTGYLHIGG. The 'KMSKS' region motif lies at 237-241; sequence KLSKR. Lysine 240 contacts ATP.

The protein belongs to the class-I aminoacyl-tRNA synthetase family. Glutamate--tRNA ligase type 1 subfamily. Monomer.

The protein localises to the cytoplasm. It catalyses the reaction tRNA(Glu) + L-glutamate + ATP = L-glutamyl-tRNA(Glu) + AMP + diphosphate. Functionally, catalyzes the attachment of glutamate to tRNA(Glu) in a two-step reaction: glutamate is first activated by ATP to form Glu-AMP and then transferred to the acceptor end of tRNA(Glu). This is Glutamate--tRNA ligase from Xanthomonas euvesicatoria pv. vesicatoria (strain 85-10) (Xanthomonas campestris pv. vesicatoria).